The primary structure comprises 465 residues: ATP synthase subunit beta (465 aa).

148–155 provides a ligand contact to ATP; it reads GGAGVGKT.

It belongs to the ATPase alpha/beta chains family. In terms of assembly, F-type ATPases have 2 components, CF(1) - the catalytic core - and CF(0) - the membrane proton channel. CF(1) has five subunits: alpha(3), beta(3), gamma(1), delta(1), epsilon(1). CF(0) has three main subunits: a(1), b(2) and c(9-12). The alpha and beta chains form an alternating ring which encloses part of the gamma chain. CF(1) is attached to CF(0) by a central stalk formed by the gamma and epsilon chains, while a peripheral stalk is formed by the delta and b chains.

The protein resides in the cell inner membrane. It carries out the reaction ATP + H2O + 4 H(+)(in) = ADP + phosphate + 5 H(+)(out). In terms of biological role, produces ATP from ADP in the presence of a proton gradient across the membrane. The catalytic sites are hosted primarily by the beta subunits. The polypeptide is ATP synthase subunit beta (Neisseria meningitidis serogroup B (strain ATCC BAA-335 / MC58)).